A 283-amino-acid chain; its full sequence is Protein FdhE homolog (283 aa).

This sequence belongs to the FdhE family.

Its subcellular location is the cytoplasm. Functionally, necessary for formate dehydrogenase activity. This chain is Protein FdhE homolog, found in Aquifex aeolicus (strain VF5).